The chain runs to 191 residues: Protein hugin (191 aa).

Residues 1–24 (MCGPSYCTLLLIAASCYILVCSHA) form the signal peptide. Positions 25–119 (KSLQGTSKLD…LTYYLLLQKL (95 aa)) are excised as a propeptide. 2 positions are modified to leucine amide: Leu-137 and Leu-181. A propeptide spanning residues 185-191 (AQVCGGD) is cleaved from the precursor.

This sequence belongs to the pyrokinin family. Expressed in a subgroup of neurosecretory cells in the subesophageal ganglion from embryonic stage 9 to larval stages.

It is found in the secreted. Probably has a role in larval molting. The chain is Protein hugin (Hug) from Drosophila melanogaster (Fruit fly).